The primary structure comprises 26 residues: FKAVRGERLVYSVKWEGGGKITTRIL.

The protein is Probable early E4 17 kDa protein of Homo sapiens (Human).